The primary structure comprises 250 residues: Small ribosomal subunit protein uS3 (250 aa).

A KH type-2 domain is found at 39 to 111 (IRPLIKNHYP…KVQINIFEVK (73 aa)).

Belongs to the universal ribosomal protein uS3 family. Part of the 30S ribosomal subunit. Forms a tight complex with proteins S10 and S14.

Functionally, binds the lower part of the 30S subunit head. Binds mRNA in the 70S ribosome, positioning it for translation. The chain is Small ribosomal subunit protein uS3 from Ziziphus jujuba witches'-broom phytoplasma.